The sequence spans 193 residues: UPF0301 protein Fphi_1754 (193 aa).

It belongs to the UPF0301 (AlgH) family.

The protein is UPF0301 protein Fphi_1754 of Francisella philomiragia subsp. philomiragia (strain ATCC 25017 / CCUG 19701 / FSC 153 / O#319-036).